The chain runs to 427 residues: Glutamate-1-semialdehyde 2,1-aminomutase (427 aa).

Residue Lys264 is modified to N6-(pyridoxal phosphate)lysine.

It belongs to the class-III pyridoxal-phosphate-dependent aminotransferase family. HemL subfamily. Homodimer. Requires pyridoxal 5'-phosphate as cofactor.

It localises to the cytoplasm. The enzyme catalyses (S)-4-amino-5-oxopentanoate = 5-aminolevulinate. Its pathway is porphyrin-containing compound metabolism; protoporphyrin-IX biosynthesis; 5-aminolevulinate from L-glutamyl-tRNA(Glu): step 2/2. The protein is Glutamate-1-semialdehyde 2,1-aminomutase of Clostridium botulinum (strain Alaska E43 / Type E3).